A 1000-amino-acid chain; its full sequence is DENN domain-containing protein 2A (1000 aa).

Disordered regions lie at residues Met1–Gln155, Asp174–Tyr328, Lys427–Leu464, and Lys491–His525. The segment covering Gln34 to Pro43 has biased composition (polar residues). 4 stretches are compositionally biased toward basic and acidic residues: residues Ile56 to Pro70, Asp79 to Ala117, Ser140 to Gln155, and His221 to Gly237. 2 stretches are compositionally biased toward pro residues: residues Pro249–Pro258 and Pro288–Thr307. Residues Lys427–Arg436 are compositionally biased toward basic and acidic residues. Polar residues predominate over residues Leu496–Lys506. Ser544 is modified (phosphoserine). In terms of domain architecture, uDENN spans Glu559–Ile708. The cDENN domain maps to Arg730 to Glu863. The 96-residue stretch at Arg865–Ala960 folds into the dDENN domain.

It is found in the cytoplasm. Its subcellular location is the cytoskeleton. Functionally, guanine nucleotide exchange factor (GEF) which may activate RAB9A and RAB9B. Promotes the exchange of GDP to GTP, converting inactive GDP-bound Rab proteins into their active GTP-bound form. May play a role in late endosomes back to trans-Golgi network/TGN transport. In Mus musculus (Mouse), this protein is DENN domain-containing protein 2A (Dennd2a).